The chain runs to 210 residues: Somatotropin (210 aa).

An N-terminal signal peptide occupies residues 1–23 (MARALVLLSVVLVSLLVNQGTAS). His-38 is a Zn(2+) binding site. The cysteines at positions 71 and 183 are disulfide-linked. Glu-192 provides a ligand contact to Zn(2+). A disulfide bridge links Cys-200 with Cys-208.

The protein belongs to the somatotropin/prolactin family.

It localises to the secreted. Growth hormone plays an important role in growth control. The polypeptide is Somatotropin (gh) (Ctenopharyngodon idella (Grass carp)).